The primary structure comprises 250 residues: Ubiquinone/menaquinone biosynthesis C-methyltransferase UbiE (250 aa).

Residues threonine 73, aspartate 94, 122 to 123, and serine 139 each bind S-adenosyl-L-methionine; that span reads NA.

The protein belongs to the class I-like SAM-binding methyltransferase superfamily. MenG/UbiE family.

The catalysed reaction is a 2-demethylmenaquinol + S-adenosyl-L-methionine = a menaquinol + S-adenosyl-L-homocysteine + H(+). It carries out the reaction a 2-methoxy-6-(all-trans-polyprenyl)benzene-1,4-diol + S-adenosyl-L-methionine = a 5-methoxy-2-methyl-3-(all-trans-polyprenyl)benzene-1,4-diol + S-adenosyl-L-homocysteine + H(+). It functions in the pathway quinol/quinone metabolism; menaquinone biosynthesis; menaquinol from 1,4-dihydroxy-2-naphthoate: step 2/2. The protein operates within cofactor biosynthesis; ubiquinone biosynthesis. Methyltransferase required for the conversion of demethylmenaquinol (DMKH2) to menaquinol (MKH2) and the conversion of 2-polyprenyl-6-methoxy-1,4-benzoquinol (DDMQH2) to 2-polyprenyl-3-methyl-6-methoxy-1,4-benzoquinol (DMQH2). In Francisella tularensis subsp. holarctica (strain FTNF002-00 / FTA), this protein is Ubiquinone/menaquinone biosynthesis C-methyltransferase UbiE.